Here is a 494-residue protein sequence, read N- to C-terminus: Probable cytosol aminopeptidase (494 aa).

Mn(2+) contacts are provided by lysine 260 and aspartate 265. Lysine 272 is a catalytic residue. 3 residues coordinate Mn(2+): aspartate 283, aspartate 342, and glutamate 344. Arginine 346 is an active-site residue.

This sequence belongs to the peptidase M17 family. It depends on Mn(2+) as a cofactor.

It is found in the cytoplasm. The catalysed reaction is Release of an N-terminal amino acid, Xaa-|-Yaa-, in which Xaa is preferably Leu, but may be other amino acids including Pro although not Arg or Lys, and Yaa may be Pro. Amino acid amides and methyl esters are also readily hydrolyzed, but rates on arylamides are exceedingly low.. It catalyses the reaction Release of an N-terminal amino acid, preferentially leucine, but not glutamic or aspartic acids.. Functionally, presumably involved in the processing and regular turnover of intracellular proteins. Catalyzes the removal of unsubstituted N-terminal amino acids from various peptides. The polypeptide is Probable cytosol aminopeptidase (Bacillus mycoides (strain KBAB4) (Bacillus weihenstephanensis)).